Consider the following 105-residue polypeptide: Serine protease inhibitor Kazal-type 6 (105 aa).

The first 23 residues, 1–23 (MKVAGVFLLLSLALLCFFSGEFS), serve as a signal peptide directing secretion. The residue at position 24 (glutamine 24) is a Pyrrolidone carboxylic acid. The 57-residue stretch at 49–105 (RLFQINCGEFRDPKVFCTRESDPLCGSDGQTYGNKCAFCKALEKSSGKINLKHRGKC) folds into the Kazal-like domain. Disulfide bonds link cysteine 55–cysteine 87, cysteine 65–cysteine 84, and cysteine 73–cysteine 105.

The protein resides in the secreted. Serine protease inhibitor selective for kallikreins. Efficiently inhibits KLK4, KLK5, KLK6, KLK7, KLK12, KLK13 and KLK14. Doesn't inhibit KLK8. The chain is Serine protease inhibitor Kazal-type 6 (Spink6) from Rattus norvegicus (Rat).